A 258-amino-acid chain; its full sequence is Aspartate/glutamate leucyltransferase (258 aa).

This sequence belongs to the R-transferase family. Bpt subfamily.

The protein localises to the cytoplasm. The enzyme catalyses N-terminal L-glutamyl-[protein] + L-leucyl-tRNA(Leu) = N-terminal L-leucyl-L-glutamyl-[protein] + tRNA(Leu) + H(+). It carries out the reaction N-terminal L-aspartyl-[protein] + L-leucyl-tRNA(Leu) = N-terminal L-leucyl-L-aspartyl-[protein] + tRNA(Leu) + H(+). In terms of biological role, functions in the N-end rule pathway of protein degradation where it conjugates Leu from its aminoacyl-tRNA to the N-termini of proteins containing an N-terminal aspartate or glutamate. The protein is Aspartate/glutamate leucyltransferase of Rhodopseudomonas palustris (strain BisB18).